A 510-amino-acid polypeptide reads, in one-letter code: Light-independent protochlorophyllide reductase subunit B (510 aa).

A [4Fe-4S] cluster-binding site is contributed by Asp36. The Proton donor role is filled by Asp296. 431–432 (GM) is a substrate binding site.

This sequence belongs to the ChlB/BchB/BchZ family. Protochlorophyllide reductase is composed of three subunits; ChlL, ChlN and ChlB. Forms a heterotetramer of two ChlB and two ChlN subunits. It depends on [4Fe-4S] cluster as a cofactor.

It is found in the plastid. It localises to the chloroplast. It carries out the reaction chlorophyllide a + oxidized 2[4Fe-4S]-[ferredoxin] + 2 ADP + 2 phosphate = protochlorophyllide a + reduced 2[4Fe-4S]-[ferredoxin] + 2 ATP + 2 H2O. The protein operates within porphyrin-containing compound metabolism; chlorophyll biosynthesis (light-independent). In terms of biological role, component of the dark-operative protochlorophyllide reductase (DPOR) that uses Mg-ATP and reduced ferredoxin to reduce ring D of protochlorophyllide (Pchlide) to form chlorophyllide a (Chlide). This reaction is light-independent. The NB-protein (ChlN-ChlB) is the catalytic component of the complex. This chain is Light-independent protochlorophyllide reductase subunit B, found in Angiopteris evecta (Mule's foot fern).